The chain runs to 156 residues: ATP synthase subunit b (156 aa).

Residues 7 to 27 (LFAQMIVFFVLWWVVARFVWP) form a helical membrane-spanning segment.

This sequence belongs to the ATPase B chain family. As to quaternary structure, F-type ATPases have 2 components, F(1) - the catalytic core - and F(0) - the membrane proton channel. F(1) has five subunits: alpha(3), beta(3), gamma(1), delta(1), epsilon(1). F(0) has three main subunits: a(1), b(2) and c(10-14). The alpha and beta chains form an alternating ring which encloses part of the gamma chain. F(1) is attached to F(0) by a central stalk formed by the gamma and epsilon chains, while a peripheral stalk is formed by the delta and b chains.

Its subcellular location is the cell membrane. In terms of biological role, f(1)F(0) ATP synthase produces ATP from ADP in the presence of a proton or sodium gradient. F-type ATPases consist of two structural domains, F(1) containing the extramembraneous catalytic core and F(0) containing the membrane proton channel, linked together by a central stalk and a peripheral stalk. During catalysis, ATP synthesis in the catalytic domain of F(1) is coupled via a rotary mechanism of the central stalk subunits to proton translocation. Component of the F(0) channel, it forms part of the peripheral stalk, linking F(1) to F(0). This chain is ATP synthase subunit b, found in Polynucleobacter asymbioticus (strain DSM 18221 / CIP 109841 / QLW-P1DMWA-1) (Polynucleobacter necessarius subsp. asymbioticus).